We begin with the raw amino-acid sequence, 336 residues long: Ribosomal RNA large subunit methyltransferase F (336 aa).

Belongs to the methyltransferase superfamily. METTL16/RlmF family.

The protein resides in the cytoplasm. The enzyme catalyses adenosine(1618) in 23S rRNA + S-adenosyl-L-methionine = N(6)-methyladenosine(1618) in 23S rRNA + S-adenosyl-L-homocysteine + H(+). In terms of biological role, specifically methylates the adenine in position 1618 of 23S rRNA. This chain is Ribosomal RNA large subunit methyltransferase F, found in Serratia proteamaculans (strain 568).